Consider the following 493-residue polypeptide: Ribose import ATP-binding protein RbsA (493 aa).

ABC transporter domains are found at residues 5–241 and 252–491; these read LKIS…VGRR and EKGE…AAAI. 37-44 provides a ligand contact to ATP; sequence GENGAGKS.

The protein belongs to the ABC transporter superfamily. Ribose importer (TC 3.A.1.2.1) family. In terms of assembly, the complex is composed of an ATP-binding protein (RbsA), two transmembrane proteins (RbsC) and a solute-binding protein (RbsB).

The protein resides in the cell inner membrane. The catalysed reaction is D-ribose(out) + ATP + H2O = D-ribose(in) + ADP + phosphate + H(+). Functionally, part of the ABC transporter complex RbsABC involved in ribose import. Responsible for energy coupling to the transport system. The polypeptide is Ribose import ATP-binding protein RbsA (Haemophilus influenzae (strain 86-028NP)).